A 637-amino-acid chain; its full sequence is 1-deoxy-D-xylulose-5-phosphate synthase (637 aa).

Thiamine diphosphate is bound by residues histidine 88 and 129 to 131 (GHS). Aspartate 160 lines the Mg(2+) pocket. Residues 161–162 (GA), asparagine 189, phenylalanine 293, and glutamate 370 each bind thiamine diphosphate. Position 189 (asparagine 189) interacts with Mg(2+).

Belongs to the transketolase family. DXPS subfamily. As to quaternary structure, homodimer. Mg(2+) serves as cofactor. Thiamine diphosphate is required as a cofactor.

It catalyses the reaction D-glyceraldehyde 3-phosphate + pyruvate + H(+) = 1-deoxy-D-xylulose 5-phosphate + CO2. It participates in metabolic intermediate biosynthesis; 1-deoxy-D-xylulose 5-phosphate biosynthesis; 1-deoxy-D-xylulose 5-phosphate from D-glyceraldehyde 3-phosphate and pyruvate: step 1/1. Functionally, catalyzes the acyloin condensation reaction between C atoms 2 and 3 of pyruvate and glyceraldehyde 3-phosphate to yield 1-deoxy-D-xylulose-5-phosphate (DXP). The chain is 1-deoxy-D-xylulose-5-phosphate synthase from Acinetobacter baumannii (strain AYE).